Reading from the N-terminus, the 145-residue chain is UI (145 aa).

The N-terminal stretch at 1 to 22 (MKPVPLVLLITSVLLTTHIPLS) is a signal peptide. V143 is modified (valine amide).

Belongs to the sauvagine/corticotropin-releasing factor/urotensin I family.

The protein resides in the secreted. Its function is as follows. Urotensin is found in the teleost caudal neurosecretory system. It has a suggested role in osmoregulation and as a corticotropin-releasing factor. The non-hormonal portion of this precursor may be a urotensin binding protein, urophysin. In Carassius auratus (Goldfish), this protein is UI.